We begin with the raw amino-acid sequence, 145 residues long: Ribosome-binding factor A (145 aa).

Over residues 122–132 the composition is skewed to basic and acidic residues; the sequence is KVQRDLESAPR. The disordered stretch occupies residues 122–145; sequence KVQRDLESAPREDDEGEPASSSRD.

The protein belongs to the RbfA family. Monomer. Binds 30S ribosomal subunits, but not 50S ribosomal subunits or 70S ribosomes.

Its subcellular location is the cytoplasm. One of several proteins that assist in the late maturation steps of the functional core of the 30S ribosomal subunit. Associates with free 30S ribosomal subunits (but not with 30S subunits that are part of 70S ribosomes or polysomes). Required for efficient processing of 16S rRNA. May interact with the 5'-terminal helix region of 16S rRNA. The protein is Ribosome-binding factor A of Methylorubrum extorquens (strain CM4 / NCIMB 13688) (Methylobacterium extorquens).